The chain runs to 443 residues: Tryptophan synthase beta chain 2, chloroplastic (443 aa).

Residues 1 to 32 (PGPPPPAPEGRRRRGRGRNAAGQAVAAEASPA) are disordered. Residues 1–45 (PGPPPPAPEGRRRRGRGRNAAGQAVAAEASPAAVEMGNGAAAPGL) constitute a chloroplast transit peptide. Over residues 18–32 (RNAAGQAVAAEASPA) the composition is skewed to low complexity. Position 138 is an N6-(pyridoxal phosphate)lysine (K138).

The protein belongs to the TrpB family. In terms of assembly, tetramer of two alpha and two beta chains. Requires pyridoxal 5'-phosphate as cofactor.

The protein resides in the plastid. The protein localises to the chloroplast. It carries out the reaction (1S,2R)-1-C-(indol-3-yl)glycerol 3-phosphate + L-serine = D-glyceraldehyde 3-phosphate + L-tryptophan + H2O. Its pathway is amino-acid biosynthesis; L-tryptophan biosynthesis; L-tryptophan from chorismate: step 5/5. Functionally, the beta subunit is responsible for the synthesis of L-tryptophan from indole and L-serine. The sequence is that of Tryptophan synthase beta chain 2, chloroplastic (TSB2) from Zea mays (Maize).